We begin with the raw amino-acid sequence, 87 residues long: UPF0250 protein ESA_02696 (87 aa).

Belongs to the UPF0250 family.

This Cronobacter sakazakii (strain ATCC BAA-894) (Enterobacter sakazakii) protein is UPF0250 protein ESA_02696.